Reading from the N-terminus, the 392-residue chain is Acetyl-CoA acetyltransferase (392 aa).

Cysteine 85 acts as the Acyl-thioester intermediate in catalysis. CoA contacts are provided by cysteine 206, serine 207, valine 209, and lysine 332. Histidine 336 acts as the Proton acceptor in catalysis.

The protein belongs to the thiolase-like superfamily. Thiolase family. Interacts with HMG-CoA synthase (HMGCS) that catalyzes the second step in the pathway and with a DUF35 protein. The acetoacetyl-CoA thiolase/HMG-CoA synthase complex channels the intermediate via a fused CoA-binding site, which allows for efficient coupling of the endergonic thiolase reaction with the exergonic HMGCS reaction.

It carries out the reaction 2 acetyl-CoA = acetoacetyl-CoA + CoA. The protein operates within metabolic intermediate biosynthesis; (R)-mevalonate biosynthesis; (R)-mevalonate from acetyl-CoA: step 1/3. Functionally, catalyzes the condensation of two acetyl-coA molecules into acetoacetyl-CoA. Functions in the mevalonate (MVA) pathway leading to isopentenyl diphosphate (IPP), a key precursor for the biosynthesis of isoprenoid compounds that are building blocks of archaeal membrane lipids. The chain is Acetyl-CoA acetyltransferase from Methanocaldococcus jannaschii (strain ATCC 43067 / DSM 2661 / JAL-1 / JCM 10045 / NBRC 100440) (Methanococcus jannaschii).